The sequence spans 283 residues: Putative 4-diphosphocytidyl-2-C-methyl-D-erythritol kinase (283 aa).

Lysine 11 is a catalytic residue. Residue 95 to 105 (PVCAGMGGGSS) coordinates ATP. Aspartate 137 is a catalytic residue.

This sequence belongs to the GHMP kinase family. IspE subfamily.

It catalyses the reaction 4-CDP-2-C-methyl-D-erythritol + ATP = 4-CDP-2-C-methyl-D-erythritol 2-phosphate + ADP + H(+). Its function is as follows. Catalyzes the phosphorylation of the position 2 hydroxy group of 4-diphosphocytidyl-2C-methyl-D-erythritol. The polypeptide is Putative 4-diphosphocytidyl-2-C-methyl-D-erythritol kinase (Streptococcus equi subsp. equi (strain 4047)).